We begin with the raw amino-acid sequence, 657 residues long: Broad substrate specificity ATP-binding cassette transporter ABCG2 (657 aa).

The segment at 1–25 is disordered; sequence MSSSNDHVLVPMSQRNKNGLPGMSS. At 1-395 the chain is on the cytoplasmic side; it reads MSSSNDHVLV…KNLLGNPQAS (395 aa). In terms of domain architecture, ABC transporter spans 48–285; sequence VKSGFLVRKT…FASAGYHCEP (238 aa). ATP-binding positions include 79 to 86, 183 to 189, E210, and H242; these read GPTGGGKS and RGISGGE. An ABC transmembrane type-2 domain is found at 389–653; sequence LGNPQASVAQ…TIAYLKLLFL (265 aa). A helical membrane pass occupies residues 396–416; sequence VAQLIVTVILGLIIGALYFGL. Over 417 to 428 the chain is Extracellular; the sequence is KNDPTGMQNRAG. Residues 429–449 traverse the membrane as a helical segment; sequence VFFFLTTNQCFTSVSAVELFV. The Cytoplasmic segment spans residues 450–477; that stretch reads VEKKLFIHEYISGYYRVSSYFFGKLVSD. Residues 478–498 form a helical membrane-spanning segment; the sequence is LLPMRFLPSVIYTCILYFMLG. At 499 to 506 the chain is on the extracellular side; it reads LKRTVEAF. The chain crosses the membrane as a helical span at residues 507 to 527; the sequence is FIMMFTLIMVAYTASSMALAI. At 528–535 the chain is on the cytoplasmic side; the sequence is AAGQSVVS. Residues 536–556 traverse the membrane as a helical segment; that stretch reads VATLLMTISFVFMMLFSGLLV. The Extracellular portion of the chain corresponds to 557-632; sequence NLRTIGPWLS…LSPWGLWRNH (76 aa). The cysteines at positions 592 and 610 are disulfide-linked. N-linked (GlcNAc...) asparagine glycans are attached at residues N596 and N600. The helical transmembrane segment at 633-653 threads the bilayer; the sequence is VALACMIIIFLTIAYLKLLFL. The Cytoplasmic portion of the chain corresponds to 654–657; sequence KKYS.

The protein belongs to the ABC transporter superfamily. ABCG family. Eye pigment precursor importer (TC 3.A.1.204) subfamily. Homodimer; disulfide-linked. The minimal functional unit is a homodimer, but the major oligomeric form in plasma membrane is a homotetramer with possibility of higher order oligomerization up to homododecamers. In terms of processing, N-glycosylated in brain capillary, kidney and small intestine but not in heart. N-glycosylated. Glycosylation-deficient ABCG2 is normally expressed and functional. Post-translationally, phosphorylated. Phosphorylation may regulate the localization to the plasma membrane, the homooligomerization and therefore, the activity of the transporter. As to expression, highly expressed in brain capillary, kidney and small intestine. Lower expression in heart. Preferentially expressed (at protein level) on the luminal membrane of brain capillaries, in kidney and small intestine.

It is found in the cell membrane. The protein resides in the apical cell membrane. It localises to the mitochondrion membrane. It catalyses the reaction ATP + H2O + xenobioticSide 1 = ADP + phosphate + xenobioticSide 2.. The enzyme catalyses urate(in) + ATP + H2O = urate(out) + ADP + phosphate + H(+). It carries out the reaction indoxyl sulfate(in) + ATP + H2O = indoxyl sulfate(out) + ADP + phosphate + H(+). The catalysed reaction is sphing-4-enine 1-phosphate(in) + ATP + H2O = sphing-4-enine 1-phosphate(out) + ADP + phosphate + H(+). It catalyses the reaction estrone 3-sulfate(in) + ATP + H2O = estrone 3-sulfate(out) + ADP + phosphate + H(+). The enzyme catalyses dehydroepiandrosterone 3-sulfate(in) + ATP + H2O = dehydroepiandrosterone 3-sulfate(out) + ADP + phosphate + H(+). It carries out the reaction 4-methylumbelliferone sulfate(in) + ATP + H2O = 4-methylumbelliferone sulfate(out) + ADP + phosphate + H(+). The catalysed reaction is 5,7-dimethyl-2-methylamino-4-(3-pyridylmethyl)-1,3-benzothiazol-6-yl beta-D-glucuronate(in) + ATP + H2O = 5,7-dimethyl-2-methylamino-4-(3-pyridylmethyl)-1,3-benzothiazol-6-yl beta-D-glucuronate(out) + ADP + phosphate + H(+). It catalyses the reaction 4-methylumbelliferone beta-D-glucuronate(in) + ATP + H2O = 4-methylumbelliferone beta-D-glucuronate(out) + ADP + phosphate + H(+). The enzyme catalyses 5,7-dimethyl-2-methylamino-4-(3-pyridylmethyl)-1,3-benzothiazol-6-yl sulfate(in) + ATP + H2O = 5,7-dimethyl-2-methylamino-4-(3-pyridylmethyl)-1,3-benzothiazol-6-yl sulfate(out) + ADP + phosphate + H(+). It carries out the reaction 17beta-estradiol 17-O-(beta-D-glucuronate)(in) + ATP + H2O = 17beta-estradiol 17-O-(beta-D-glucuronate)(out) + ADP + phosphate + H(+). The catalysed reaction is methotrexate(in) + ATP + H2O = methotrexate(out) + ADP + phosphate + H(+). It catalyses the reaction riboflavin(in) + ATP + H2O = riboflavin(out) + ADP + phosphate + H(+). The enzyme catalyses pheophorbide a(in) + ATP + H2O = pheophorbide a(out) + ADP + phosphate + H(+). It carries out the reaction itaconate(in) + ATP + H2O = itaconate(out) + ADP + phosphate + H(+). Its function is as follows. Broad substrate specificity ATP-dependent transporter of the ATP-binding cassette (ABC) family that actively extrudes a wide variety of physiological compounds, dietary toxins and xenobiotics from cells. Involved in porphyrin homeostasis, mediating the export of protoporphyrin IX (PPIX) from both mitochondria to cytosol and cytosol to extracellular space, it also functions in the cellular export of heme. Also mediates the efflux of sphingosine-1-P from cells. Acts as a urate exporter functioning in both renal and extrarenal urate excretion. In kidney, it also functions as a physiological exporter of the uremic toxin indoxyl sulfate. Also involved in the excretion of steroids like estrone 3-sulfate/E1S, 3beta-sulfooxy-androst-5-en-17-one/DHEAS, and other sulfate conjugates. Mediates the secretion of the riboflavin and biotin vitamins into milk. Extrudes pheophorbide a, a phototoxic porphyrin catabolite of chlorophyll, reducing its bioavailability. Plays an important role in the exclusion of xenobiotics from the brain. It confers to cells a resistance to multiple drugs and other xenobiotics including mitoxantrone, pheophorbide, camptothecin, methotrexate, azidothymidine, and the anthracyclines daunorubicin and doxorubicin, through the control of their efflux. In placenta, it limits the penetration of drugs from the maternal plasma into the fetus. May play a role in early stem cell self-renewal by blocking differentiation. In inflammatory macrophages, exports itaconate from the cytosol to the extracellular compartment and limits the activation of TFEB-dependent lysosome biogenesis involved in antibacterial innate immune response. This is Broad substrate specificity ATP-binding cassette transporter ABCG2 (Abcg2) from Rattus norvegicus (Rat).